The sequence spans 446 residues: Oxysterols receptor LXR-beta (446 aa).

Positions 1 to 69 (MSSPTSSLDT…PERKRKKGPA (69 aa)) are disordered. The interval 1–76 (MSSPTSSLDT…GPAPKMLGHE (76 aa)) is transactivation AF-1; required for ligand-independent transactivation function. The segment covering 17 to 28 (SPQPSTSATSPT) has biased composition (low complexity). Residues 75–152 (HELCRVCGDK…AGMREQCVLS (78 aa)) constitute a DNA-binding region (nuclear receptor). NR C4-type zinc fingers lie at residues 78 to 98 (CRVC…CEGC) and 116 to 140 (CRGS…LRKC). A disordered region spans residues 159–201 (KRIQKQQQQQPPPPSEPAASSSGRPAASPGTSEASSQGSGEGE). A compositionally biased stretch (low complexity) spans 175–196 (PAASSSGRPAASPGTSEASSQG). The transactivation AF-2; required for ligand-dependent transactivation function; mediates interaction with CCAR2 stretch occupies residues 205–446 (LTAAQELMIQ…LLSEIWDVHE (242 aa)). Positions 208–446 (AQELMIQQLV…LLSEIWDVHE (239 aa)) constitute an NR LBD domain. Glycyl lysine isopeptide (Lys-Gly) (interchain with G-Cter in SUMO2) cross-links involve residues K395 and K433.

Belongs to the nuclear hormone receptor family. NR1 subfamily. In terms of assembly, forms a heterodimer with RXR. Interacts with CCAR2 (via N-terminus) in a ligand-independent manner. Interacts (when sumoylated) with GPS2; interaction with GPS2 onto hepatic acute phase protein promoters prevents N-Cor corepressor complex dissociation. Interacts with ABCA12 and ABCA1; this interaction is required for ABCA1 localization to the cell surface and is necessary for its normal activity and stability. Post-translationally, sumoylated by SUMO2 at Lys-395 and Lys-433 during the hepatic acute phase response, leading to promote interaction with GPS2 and prevent N-Cor corepressor complex dissociation. In terms of tissue distribution, ubiquitous.

Its subcellular location is the nucleus. Functionally, nuclear receptor that exhibits a ligand-dependent transcriptional activation activity. Binds preferentially to double-stranded oligonucleotide direct repeats having the consensus half-site sequence 5'-AGGTCA-3' and 4-nt spacing (DR-4). Regulates cholesterol uptake through MYLIP-dependent ubiquitination of LDLR, VLDLR and LRP8; DLDLR and LRP8. Interplays functionally with RORA for the regulation of genes involved in liver metabolism. Induces LPCAT3-dependent phospholipid remodeling in endoplasmic reticulum (ER) membranes of hepatocytes, driving SREBF1 processing and lipogenesis. Via LPCAT3, triggers the incorporation of arachidonate into phosphatidylcholines of ER membranes, increasing membrane dynamics and enabling triacylglycerols transfer to nascent very low-density lipoprotein (VLDL) particles. Via LPCAT3 also counteracts lipid-induced ER stress response and inflammation, likely by modulating SRC kinase membrane compartmentalization and limiting the synthesis of lipid inflammatory mediators. Plays an anti-inflammatory role during the hepatic acute phase response by acting as a corepressor: inhibits the hepatic acute phase response by preventing dissociation of the N-Cor corepressor complex. The polypeptide is Oxysterols receptor LXR-beta (Nr1h2) (Mus musculus (Mouse)).